Reading from the N-terminus, the 327-residue chain is GTPase Obg (327 aa).

An Obg domain is found at 2–160 (HILKDSLSIT…LNLRLELSLI (159 aa)). Residues 161-326 (ADIGLVGFPN…LVSELFALSR (166 aa)) form the OBG-type G domain. GTP contacts are provided by residues 167–174 (GFPNAGKS), 192–196 (FTTRF), 213–216 (DVPG), 280–283 (NKLD), and 307–309 (SIY). Mg(2+)-binding residues include Ser174 and Thr194.

Belongs to the TRAFAC class OBG-HflX-like GTPase superfamily. OBG GTPase family. In terms of assembly, monomer. It depends on Mg(2+) as a cofactor.

The protein resides in the cytoplasm. Functionally, an essential GTPase which binds GTP, GDP and possibly (p)ppGpp with moderate affinity, with high nucleotide exchange rates and a fairly low GTP hydrolysis rate. Plays a role in control of the cell cycle, stress response, ribosome biogenesis and in those bacteria that undergo differentiation, in morphogenesis control. The sequence is that of GTPase Obg from Borrelia hermsii (strain HS1 / DAH).